Reading from the N-terminus, the 442-residue chain is Lipoyl synthase, apicoplast (442 aa).

A signal peptide spans 1–25 (MHVLTPSLYIYAFFIVCVRLKCGRS). Residues 92 to 154 (LLRSESATDE…EKKPDWFHVP (63 aa)) are disordered. A compositionally biased stretch (basic and acidic residues) spans 109–127 (LKEKLKESPANWGKDKQEE). [4Fe-4S] cluster contacts are provided by C177, C182, C188, C203, C207, C210, and S418. The Radical SAM core domain occupies 189-407 (WNIGTATIML…KEEGMKMGFK (219 aa)).

This sequence belongs to the radical SAM superfamily. Lipoyl synthase family. [4Fe-4S] cluster is required as a cofactor.

The protein localises to the plastid. Its subcellular location is the apicoplast. The enzyme catalyses [[Fe-S] cluster scaffold protein carrying a second [4Fe-4S](2+) cluster] + N(6)-octanoyl-L-lysyl-[protein] + 2 oxidized [2Fe-2S]-[ferredoxin] + 2 S-adenosyl-L-methionine + 4 H(+) = [[Fe-S] cluster scaffold protein] + N(6)-[(R)-dihydrolipoyl]-L-lysyl-[protein] + 4 Fe(3+) + 2 hydrogen sulfide + 2 5'-deoxyadenosine + 2 L-methionine + 2 reduced [2Fe-2S]-[ferredoxin]. It participates in protein modification; protein lipoylation via endogenous pathway; protein N(6)-(lipoyl)lysine from octanoyl-[acyl-carrier-protein]: step 2/2. In terms of biological role, catalyzes the radical-mediated insertion of two sulfur atoms into the C-6 and C-8 positions of the octanoyl moiety bound to the lipoyl domains of lipoate-dependent enzymes, thereby converting the octanoylated domains into lipoylated derivatives. In Plasmodium vivax (strain Salvador I), this protein is Lipoyl synthase, apicoplast.